The sequence spans 186 residues: Large ribosomal subunit protein uL10 (186 aa).

It belongs to the universal ribosomal protein uL10 family. As to quaternary structure, part of the ribosomal stalk of the 50S ribosomal subunit. The N-terminus interacts with L11 and the large rRNA to form the base of the stalk. The C-terminus forms an elongated spine to which L12 dimers bind in a sequential fashion forming a multimeric L10(L12)X complex.

Its function is as follows. Forms part of the ribosomal stalk, playing a central role in the interaction of the ribosome with GTP-bound translation factors. In Rhodococcus jostii (strain RHA1), this protein is Large ribosomal subunit protein uL10.